The sequence spans 47 residues: Large ribosomal subunit protein bL34 (47 aa).

The protein belongs to the bacterial ribosomal protein bL34 family.

The polypeptide is Large ribosomal subunit protein bL34 (Nocardia farcinica (strain IFM 10152)).